Here is a 309-residue protein sequence, read N- to C-terminus: Probable manganese-dependent inorganic pyrophosphatase (309 aa).

Positions 9, 13, 15, 75, 97, and 149 each coordinate Mn(2+).

This sequence belongs to the PPase class C family. Requires Mn(2+) as cofactor.

Its subcellular location is the cytoplasm. It catalyses the reaction diphosphate + H2O = 2 phosphate + H(+). The chain is Probable manganese-dependent inorganic pyrophosphatase from Staphylococcus epidermidis (strain ATCC 12228 / FDA PCI 1200).